Reading from the N-terminus, the 376-residue chain is Mannosyl phosphorylinositol ceramide synthase CSH1 (376 aa).

2 helical membrane passes run 7 to 27 (ILII…FDLL) and 274 to 294 (ILSC…GEFT). The interval 331 to 351 (NKEKRRNPTRHEYNSRGKRLR) is disordered. Serine 354 carries the phosphoserine modification.

The protein belongs to the glycosyltransferase 32 family. In terms of assembly, heterodimer of CSH1 and CSG2.

It is found in the vacuole membrane. The enzyme catalyses a 1D-myo-inositol-1-phospho-N-[(R)-2-hydroxy-very-long-chain fatty acyl]-(R)-4-hydroxysphingoid base + GDP-alpha-D-mannose = an alpha-D-mannosyl-(1&lt;-&gt;6)-1D-myo-inositol-1-phospho-N-[(R)-2-hydroxy-very-long-chain fatty acyl]-(R)-4-hydroxysphingoid base + GDP + H(+). Involved in the synthesis of mannosyl phosphorylinositol ceramide. Catalyzes the addition of mannosyl to phosphorylinositol ceramide. The sequence is that of Mannosyl phosphorylinositol ceramide synthase CSH1 from Saccharomyces cerevisiae (strain ATCC 204508 / S288c) (Baker's yeast).